Reading from the N-terminus, the 217-residue chain is Probable transaldolase (217 aa).

Lysine 83 (schiff-base intermediate with substrate) is an active-site residue.

This sequence belongs to the transaldolase family. Type 3B subfamily.

Its subcellular location is the cytoplasm. It catalyses the reaction D-sedoheptulose 7-phosphate + D-glyceraldehyde 3-phosphate = D-erythrose 4-phosphate + beta-D-fructose 6-phosphate. The protein operates within carbohydrate degradation; pentose phosphate pathway; D-glyceraldehyde 3-phosphate and beta-D-fructose 6-phosphate from D-ribose 5-phosphate and D-xylulose 5-phosphate (non-oxidative stage): step 2/3. Transaldolase is important for the balance of metabolites in the pentose-phosphate pathway. This chain is Probable transaldolase, found in Novosphingobium aromaticivorans (strain ATCC 700278 / DSM 12444 / CCUG 56034 / CIP 105152 / NBRC 16084 / F199).